Consider the following 612-residue polypeptide: Peroxisomal carnitine O-octanoyltransferase (612 aa).

Methionine 1 bears the N-acetylmethionine mark. 2 positions are modified to N6-succinyllysine: lysine 40 and lysine 57. Histidine 327 serves as the catalytic Proton acceptor. CoA-binding positions include lysine 406 and 410-417; that span reads KEEALHPD. Position 406 is an N6-acetyllysine; alternate (lysine 406). An N6-succinyllysine; alternate modification is found at lysine 406. (R)-carnitine contacts are provided by tyrosine 439, threonine 441, and threonine 452. The short motif at 610–612 is the Microbody targeting signal element; it reads AHL.

The protein belongs to the carnitine/choline acetyltransferase family.

It localises to the peroxisome. The enzyme catalyses octanoyl-CoA + (R)-carnitine = O-octanoyl-(R)-carnitine + CoA. The catalysed reaction is 4,8-dimethylnonanoyl-CoA + (R)-carnitine = O-4,8-dimethylnonanoyl-(R)-carnitine + CoA. It participates in lipid metabolism; fatty acid beta-oxidation. Functionally, beta-oxidation of fatty acids. The highest activity concerns the C6 to C10 chain length substrate. The chain is Peroxisomal carnitine O-octanoyltransferase (Crot) from Mus musculus (Mouse).